A 389-amino-acid polypeptide reads, in one-letter code: Teichoic acid glycerol-phosphate transferase (389 aa).

Belongs to the CDP-glycerol glycerophosphotransferase family.

It localises to the cell membrane. It carries out the reaction 4-O-[(2R)-glycerylphospho]-N-acetyl-beta-D-mannosaminyl-(1-&gt;4)-N-acetyl-alpha-D-glucosaminyl di-trans,octa-cis-undecaprenyl diphosphate + CDP-glycerol = 4-O-[di(2R)-glycerylphospho]-N-acetyl-beta-D-mannosaminyl-(1-&gt;4)-N-acetyl-alpha-D-glucosaminyl di-trans,octa-cis-undecaprenyl diphosphate + CMP + H(+). The protein operates within cell wall biogenesis; poly(ribitol phosphate) teichoic acid biosynthesis. In terms of biological role, catalyzes the addition of a second glycerol phosphate unit from CDP-glycerol to the prenolpyrophosphate-linked disaccharide, to complete the linkage unit. This chain is Teichoic acid glycerol-phosphate transferase (tarF), found in Staphylococcus aureus (strain NCTC 8325 / PS 47).